A 63-amino-acid chain; its full sequence is Chromatin protein Cren7 (63 aa).

The protein belongs to the Cren7 family. In terms of assembly, monomer. In terms of processing, methylated at multiple sites, to varying extents.

The protein resides in the chromosome. It is found in the cytoplasm. A chromatin protein, binds double-stranded DNA without sequence specificity. Constrains negative DNA supercoils. The polypeptide is Chromatin protein Cren7 (Pyrobaculum calidifontis (strain DSM 21063 / JCM 11548 / VA1)).